Consider the following 306-residue polypeptide: Ribosomal protein L11 methyltransferase (306 aa).

The S-adenosyl-L-methionine site is built by Thr154, Gly179, Asp201, and Asn242.

This sequence belongs to the methyltransferase superfamily. PrmA family.

It localises to the cytoplasm. The catalysed reaction is L-lysyl-[protein] + 3 S-adenosyl-L-methionine = N(6),N(6),N(6)-trimethyl-L-lysyl-[protein] + 3 S-adenosyl-L-homocysteine + 3 H(+). Its function is as follows. Methylates ribosomal protein L11. The polypeptide is Ribosomal protein L11 methyltransferase (Stenotrophomonas maltophilia (strain K279a)).